The sequence spans 137 residues: MNKENKKNQDMSIEEILKSIKGIINERKNPIYDNYSADEDILELTDIVNQNEEENLISTKSASEVEEVFRNFTDTIKDKKLNNNFSSKNALEELVIGMLKPELKAWLDKNLPILVKELVEIEIKKLVQYSKRNDSNY.

This is an uncharacterized protein from Rickettsia prowazekii (strain Madrid E).